The sequence spans 487 residues: Cysteine--tRNA ligase (487 aa).

C27 provides a ligand contact to Zn(2+). The short motif at 29–39 (ATVQGLPHVGH) is the 'HIGH' region element. The interval 174 to 194 (IDDMQGAPDADPRGKKDPRDF) is disordered. Positions 183-194 (ADPRGKKDPRDF) are enriched in basic and acidic residues. Zn(2+) is bound by residues C225, H250, and E254. Positions 281 to 285 (KMSKS) match the 'KMSKS' region motif. K284 serves as a coordination point for ATP.

This sequence belongs to the class-I aminoacyl-tRNA synthetase family. In terms of assembly, monomer. Requires Zn(2+) as cofactor.

Its subcellular location is the cytoplasm. It carries out the reaction tRNA(Cys) + L-cysteine + ATP = L-cysteinyl-tRNA(Cys) + AMP + diphosphate. The protein is Cysteine--tRNA ligase of Arthrobacter sp. (strain FB24).